Reading from the N-terminus, the 409-residue chain is Nucleoprotein (409 aa).

Disordered regions lie at residues 1-32 (MASG…SSGN), 46-69 (SPPL…QQHG), 120-193 (GADT…SGAE), and 238-259 (VDQV…DKMN). Low complexity predominate over residues 15 to 31 (PVIKLGGPKPPKVGSSG). The RNA-binding stretch occupies residues 29–160 (SSGNASWFQA…GNFRWDFIPL (132 aa)). Residues 31–156 (GNASWFQAIK…GGPDGNFRWD (126 aa)) form the CoV N NTD domain. The span at 162 to 179 (RGRSGKSTAASSAASSRA) shows a compositional bias: low complexity. Basic and acidic residues-rich tracts occupy residues 180–192 (PSRE…RSGA) and 247–259 (KGKE…DKMN). Ser190 bears the Phosphoserine; by host mark. One can recognise a CoV N CTD domain in the interval 215–331 (TKAKADEMAH…QCVDGVGTRP (117 aa)). The interval 226–333 (RYCKRTIPPG…VDGVGTRPKD (108 aa)) is dimerization. Residues Cys320 and Cys323 are joined by a disulfide bond. The segment at 327 to 409 (VGTRPKDDEP…GDSALGENEL (83 aa)) is disordered. A compositionally biased stretch (low complexity) spans 341 to 354 (RSSSRPATRTSSPA). A compositionally biased stretch (basic residues) spans 358–367 (PRPKKEKKTK). Residues 368 to 384 (KQDDEVDKALTSDEERN) show a composition bias toward basic and acidic residues. Thr378 bears the Phosphothreonine; by host mark. Residue Ser379 is modified to Phosphoserine; by host.

This sequence belongs to the gammacoronavirus nucleocapsid protein family. Homooligomer. Both monomeric and oligomeric forms interact with RNA. Interacts with protein M. Interacts with NSP3; this interaction serves to tether the genome to the newly translated replicase-transcriptase complex at a very early stage of infection. ADP-ribosylated. The ADP-ribosylation is retained in the virion during infection. In terms of processing, phosphorylated on serine and threonine residues.

Its subcellular location is the virion. The protein resides in the host endoplasmic reticulum-Golgi intermediate compartment. It is found in the host Golgi apparatus. Functionally, packages the positive strand viral genome RNA into a helical ribonucleocapsid (RNP) and plays a fundamental role during virion assembly through its interactions with the viral genome and membrane protein M. Plays an important role in enhancing the efficiency of subgenomic viral RNA transcription as well as viral replication. This chain is Nucleoprotein, found in Gallus gallus (Chicken).